Here is a 126-residue protein sequence, read N- to C-terminus: SH2 domain-containing protein 1A (126 aa).

In terms of domain architecture, SH2 spans 6–102; the sequence is VYHGKISREM…GIVTPLQYPV (97 aa). The interval 67–92 is interaction with FYN SH3 domain; that stretch reads ETAPGVHKRFFRKVKNLISAFQKPDQ. Position 89 is an N6-acetyllysine (Lys-89). A disordered region spans residues 100 to 126; that stretch reads YPVEKSSARSPQAPTGRRDSDICLKAP. The span at 115–126 shows a compositional bias: basic and acidic residues; it reads GRRDSDICLKAP. Ser-119 is modified (phosphoserine).

In terms of assembly, interacts with CD84, CD244, LY9, SLAMF1 and FYN. Interacts with NTRK1, NTRK2 and NTRK3.

The protein resides in the cytoplasm. Its function is as follows. Cytoplasmic adapter regulating receptors of the signaling lymphocytic activation molecule (SLAM) family such as SLAMF1, CD244, LY9, CD84, SLAMF6 and SLAMF7. In SLAM signaling seems to cooperate with SH2D1B/EAT-2. Initially it has been proposed that association with SLAMF1 prevents SLAMF1 binding to inhibitory effectors including INPP5D/SHIP1 and PTPN11/SHP-2. However, by simultaneous interactions, recruits FYN which subsequently phosphorylates and activates SLAMF1. Positively regulates CD244/2B4- and CD84-mediated natural killer (NK) cell functions. Can also promote CD48-, SLAMF6 -, LY9-, and SLAMF7-mediated NK cell activation. In the context of NK cell-mediated cytotoxicity enhances conjugate formation with target cells. May also regulate the activity of the neurotrophin receptors NTRK1, NTRK2 and NTRK3. This chain is SH2 domain-containing protein 1A (Sh2d1a), found in Rattus norvegicus (Rat).